The primary structure comprises 264 residues: Nuclear egress protein 1 (264 aa).

The segment covering 1–12 has biased composition (basic residues); that stretch reads MTVHKNRFRRSR. Residues 1–22 are disordered; sequence MTVHKNRFRRSRSLSVTHRIQK. The segment at 83-187 adopts a CCCH-type zinc-finger fold; it reads CLEFSPYANE…HIVFQSRTLH (105 aa).

The protein belongs to the herpesviridae NEC1 protein family. As to quaternary structure, forms a heterohexameric complex with NEC2. Interacts with capsid vertex specific component 2/CVC2; this interaction directs the capsid to the host inner nuclear membrane to initiate budding. In terms of processing, phosphorylated at serine residues in the N-terminus. This phosphorylation regulates the localization within the inner nuclear membrane.

Its subcellular location is the host nucleus inner membrane. Functionally, plays an essential role in virion nuclear egress, the first step of virion release from infected cell. Within the host nucleus, NEC1 interacts with the newly formed capsid through the vertexes and directs it to the inner nuclear membrane by associating with NEC2. Induces the budding of the capsid at the inner nuclear membrane as well as its envelopment into the perinuclear space. There, the NEC1/NEC2 complex promotes the fusion of the enveloped capsid with the outer nuclear membrane and the subsequent release of the viral capsid into the cytoplasm where it will reach the secondary budding sites in the host Golgi or trans-Golgi network. This chain is Nuclear egress protein 1, found in Human herpesvirus 6B (HHV-6 variant B).